The following is a 334-amino-acid chain: Glycerol-3-phosphate dehydrogenase [NAD(P)+] (334 aa).

Residues Ser11, Trp12, Arg32, and Lys106 each coordinate NADPH. Positions 106 and 136 each coordinate sn-glycerol 3-phosphate. Ala140 is an NADPH binding site. Sn-glycerol 3-phosphate-binding residues include Lys191, Asp244, Ser254, Arg255, and Asn256. The active-site Proton acceptor is Lys191. Arg255 is an NADPH binding site. Residues Val279 and Glu281 each coordinate NADPH.

The protein belongs to the NAD-dependent glycerol-3-phosphate dehydrogenase family.

The protein localises to the cytoplasm. The enzyme catalyses sn-glycerol 3-phosphate + NAD(+) = dihydroxyacetone phosphate + NADH + H(+). It carries out the reaction sn-glycerol 3-phosphate + NADP(+) = dihydroxyacetone phosphate + NADPH + H(+). It participates in membrane lipid metabolism; glycerophospholipid metabolism. Its function is as follows. Catalyzes the reduction of the glycolytic intermediate dihydroxyacetone phosphate (DHAP) to sn-glycerol 3-phosphate (G3P), the key precursor for phospholipid synthesis. This chain is Glycerol-3-phosphate dehydrogenase [NAD(P)+], found in Parafrankia sp. (strain EAN1pec).